We begin with the raw amino-acid sequence, 121 residues long: Chromosome transmission fidelity protein 8 homolog (121 aa).

The protein belongs to the CTF8 family. In terms of assembly, component of the CTF18-RFC complex, which consists of CTF18, CTF8, DSCC1, RFC2, RFC3, RFC4 and RFC5. The CTF18-RFC complex does not interact with the Rad9/Rad1/Hus1 complex. The CTF18-RFC complex interacts with POLH. CTF18/CTF8/DSCC1 associate with PCNA. CTF8 exists as a dimer with DSCC1.

The protein resides in the nucleus. In terms of biological role, chromosome cohesion factor involved in sister chromatid cohesion and fidelity of chromosome transmission. Component of one of the cell nuclear antigen loader complexes, CTF18-replication factor C (CTF18-RFC), which consists of CTF18, CTF8, DSCC1, RFC2, RFC3, RFC4 and RFC5. The CTF18-RFC complex binds to single-stranded and primed DNAs and has weak ATPase activity that is stimulated the presence of primed DNA, replication protein A (RPA) and proliferating cell nuclear antigen (PCNA). The CTF18-RFC complex catalyzes the ATP-dependent loading of PCNA onto primed and gapped DNA. It also interacts with and stimulates POLH, which is suggestive of a protein network that coordinates DNA repair, recombination and chromosome cohesion reactions with replication fork progression. This chain is Chromosome transmission fidelity protein 8 homolog, found in Homo sapiens (Human).